The chain runs to 159 residues: Large ribosomal subunit protein uL15 (159 aa).

The segment covering 1 to 18 (MKLNEIKDNEGSSKDRIR) has biased composition (basic and acidic residues). The disordered stretch occupies residues 1-39 (MKLNEIKDNEGSSKDRIRVGRGIGSGKGKTGGRGVKGQK). Residues 21–35 (RGIGSGKGKTGGRGV) are compositionally biased toward gly residues.

Belongs to the universal ribosomal protein uL15 family. In terms of assembly, part of the 50S ribosomal subunit.

Its function is as follows. Binds to the 23S rRNA. In Allorhizobium ampelinum (strain ATCC BAA-846 / DSM 112012 / S4) (Agrobacterium vitis (strain S4)), this protein is Large ribosomal subunit protein uL15.